Consider the following 414-residue polypeptide: Ribulose bisphosphate carboxylase/oxygenase activase (414 aa).

37–44 contacts ATP; it reads GRKGEGKT. Residues 296 to 326 form a disordered region; sequence RGYQTAPPPEAPVIQPVNNSSHKQKTSNTHL. Positions 311–326 are enriched in polar residues; sequence PVNNSSHKQKTSNTHL.

This sequence belongs to the RuBisCO activase family.

Its function is as follows. Activation of RuBisCO (ribulose-1,5-bisohosphate carboxylase/oxygenase; EC 4.1.1.39) involves the ATP-dependent carboxylation of the epsilon-amino group of lysine leading to a carbamate structure. This Nostoc sp. (strain PCC 7120 / SAG 25.82 / UTEX 2576) protein is Ribulose bisphosphate carboxylase/oxygenase activase (rca).